A 429-amino-acid polypeptide reads, in one-letter code: MDSALYHSAGIFGAPSASTGGSMIASSKPLAFSIERIMARTPEPKSIPFPNLFQAPVGKAEPKQSPAPLHCMIPLMPLACEPPHKLHINGLDHPDTFAYNANELLSIGLNYKNEQQDAAPAIGQYKLFRPRVVNQSSFHAMGAAVCYLNCGEGACPPHAGLVNLHPMASYLLNTPLHARQKSLFSSEKSKQGAVADRCPPGVSFKELSHSHLHHYMKESAHILSEKLFKNSAAKVNSGSPQTKPKVFTCEVCGKVFNAHYNLTRHMPVHTGARPFVCKVCGKGFRQASTLCRHKIIHTQEKPHKCNQCGKAFNRSSTLNTHTRIHAGYKPFICEFCGKGFHQKGNYKNHKLTHSGEKQFKCNICNKAFHQVYNLTFHMHTHNDKKPFTCPTCGKGFCRNFDLKKHIRKLHDISPGPHSPPTPTGNTEGQ.

Positions 29–44 (PLAFSIERIMARTPEP) match the Engrailed homology 1 repressor motif. 6 consecutive C2H2-type zinc fingers follow at residues 247–269 (FTCEVCGKVFNAHYNLTRHMPVH), 275–297 (FVCKVCGKGFRQASTLCRHKIIH), 303–325 (HKCNQCGKAFNRSSTLNTHTRIH), 331–353 (FICEFCGKGFHQKGNYKNHKLTH), 359–381 (FKCNICNKAFHQVYNLTFHMHTH), and 387–410 (FTCPTCGKGFCRNFDLKKHIRKLH). A disordered region spans residues 409 to 429 (LHDISPGPHSPPTPTGNTEGQ).

It belongs to the krueppel C2H2-type zinc-finger protein family.

The protein resides in the nucleus. Functionally, transcription repressor. Involved in the development of the forebrain region. This Danio rerio (Zebrafish) protein is Fez family zinc finger protein 1 (fezf1).